The sequence spans 91 residues: Early E3B 10.4 kDa protein (91 aa).

The signal sequence occupies residues 1-21; that stretch reads MVTVLLIFLCLPVIFSSSTFA. Over 22–33 the chain is Lumenal; that stretch reads AVSDLDPECLAP. The helical transmembrane segment at 34-56 threads the bilayer; it reads FAVYLIFTFVTATCVCSIITLLI. Topologically, residues 57-91 are cytoplasmic; sequence TSLQFFDYYYVRIVYRRHHPRYQNPQIAALLQLQP.

It belongs to the adenoviridae E3B family.

It localises to the host endoplasmic reticulum membrane. Down-regulates the EGF receptor. In Homo sapiens (Human), this protein is Early E3B 10.4 kDa protein.